The primary structure comprises 616 residues: Glutamine--fructose-6-phosphate aminotransferase [isomerizing] (616 aa).

The Nucleophile; for GATase activity role is filled by Cys2. The region spanning 2 to 221 is the Glutamine amidotransferase type-2 domain; it reads CGIVGYVGTD…QDQIVTITPE (220 aa). 2 consecutive SIS domains span residues 288 to 428 and 461 to 606; these read LGDE…VRGT and LAHW…VDQP. The For Fru-6P isomerization activity role is filled by Lys611.

In terms of assembly, homodimer.

The protein localises to the cytoplasm. The catalysed reaction is D-fructose 6-phosphate + L-glutamine = D-glucosamine 6-phosphate + L-glutamate. Catalyzes the first step in hexosamine metabolism, converting fructose-6P into glucosamine-6P using glutamine as a nitrogen source. The chain is Glutamine--fructose-6-phosphate aminotransferase [isomerizing] from Leifsonia xyli subsp. xyli (strain CTCB07).